Reading from the N-terminus, the 380-residue chain is MASVAELKEKHAAATASVNSLRERLRQRRETLLDTDVARYSKSQGRVPVSFNPTDLVCCRTLQGHSGKVYSLDWTPEKNWIVSASQDGRLIVWNALTSQKTHAIKLHCPWVMACAFAPNGQSVACGGLDSACSIFNLNSQADRDGNMPVSRILTGHKGYVSSCQYVPDQETRLITSSGDQTCVLWDVTTGQRISIFGGEFPSGHTADVQSVSINSSNTNMFVSGSCDTTVRLWDIRIASRAVRTYHGHEDDVNSVKFFPDGHRFGTGSDDGTCRLFDMRTGHQLQVYSREPDRNSNELPTVTSIAFSISGRLLFAGYSNGDCYVWDTLLAEVVLNLGNLQNSHDGRISCLGMSSDGSALCTGSWDKNLKIWAFSGHRKIV.

WD repeat units lie at residues 64–94 (GHSG…IVWN), 106–136 (LHCP…SIFN), 155–186 (GHKG…VLWD), 203–234 (GHTA…RLWD), 247–277 (GHED…RLFD), 296–326 (NELP…YVWD), and 342–372 (SHDG…KIWA).

It belongs to the WD repeat G protein beta family. G proteins are composed of 3 units, alpha, beta and gamma. Present in the root, leaf and tassel.

Its function is as follows. Guanine nucleotide-binding proteins (G proteins) are involved as a modulator or transducer in various transmembrane signaling systems. The beta and gamma chains are required for the GTPase activity, for replacement of GDP by GTP, and for G protein-effector interaction. The sequence is that of Guanine nucleotide-binding protein subunit beta (GB1) from Zea mays (Maize).